Here is a 166-residue protein sequence, read N- to C-terminus: Cofilin-2 (166 aa).

Residues 4–153 (GVTVNDEVIK…KDRSTLGEKL (150 aa)) form the ADF-H domain. Position 24 is a phosphoserine (Ser-24). A Nuclear localization signal motif is present at residues 30 to 34 (KKRKK).

This sequence belongs to the actin-binding proteins ADF family. The phosphorylation of Ser-24 may prevent recognition of the nuclear localization signal. Widely distributed in various tissues.

Its subcellular location is the nucleus matrix. The protein localises to the cytoplasm. The protein resides in the cytoskeleton. Its function is as follows. Controls reversibly actin polymerization and depolymerization in a pH-sensitive manner. It has the ability to bind G- and F-actin in a 1:1 ratio of cofilin to actin. It is the major component of intranuclear and cytoplasmic actin rods. This is Cofilin-2 (CFL2) from Gallus gallus (Chicken).